Consider the following 294-residue polypeptide: Protein PET54 (294 aa).

The protein localises to the mitochondrion inner membrane. Its function is as follows. Activator of specific mitochondrial mRNAs. PET54 is involved in the excision of intron aI5-beta from pre-mRNA for cytochrome c oxidase I (COX1) and plays a role in promoting the translation of COX3. In Saccharomyces bayanus (Yeast), this protein is Protein PET54 (PET54).